Reading from the N-terminus, the 629-residue chain is Putrebactin synthase (629 aa).

It belongs to the IucA/IucC family. As to quaternary structure, homodimer.

It carries out the reaction 2 N-(3-carboxypropanoyl)-N-hydroxyputrescine + 2 ATP = putrebactin + 2 AMP + 2 diphosphate + 2 H(+). The catalysed reaction is 2 N-(3-carboxypropanoyl)-N-hydroxyputrescine + ATP = pre-putrebactin + AMP + diphosphate + H(+). The enzyme catalyses pre-putrebactin + ATP = putrebactin + AMP + diphosphate + H(+). The protein operates within siderophore biosynthesis. Its activity is regulated as follows. Requires Mg(2+) for activity. Ligase involved in the biosynthesis of the siderophore putrebactin. Catalyzes the ATP-dependent head-to-tail dimerization of N-hydroxy-N-succinyl-putrescine (HSP) to give pre-putrebactin and subsequent macrocyclization of pre-putrebactin to give putrebactin. This is Putrebactin synthase from Shewanella sp. (strain MR-4).